A 700-amino-acid polypeptide reads, in one-letter code: E3 ubiquitin-protein ligase SspH1 (700 aa).

Positions 1–395 (MFNIRNTQPS…HSGIRIHFDM (395 aa)) are interaction with target proteins. LRR repeat units follow at residues 217 to 238 (HITT…PEGL), 239 to 257 (RELE…SLPQ), 258 to 279 (GLQK…PPGL), 280 to 297 (GDLA…EMPP), 298 to 319 (ALRE…PSGL), 320 to 337 (QKLW…EMSP), 338 to 360 (GLQE…TGLS), and 361 to 381 (SAAR…QALR). The segment at 396–403 (AGPSVPRE) is linker. Residues 404-700 (ARALHLAVAD…SYLTARWRLN (297 aa)) form an E3 ubiquitin-protein ligase catalytic domain region. An NEL domain is found at 406–700 (ALHLAVADWL…SYLTARWRLN (295 aa)). Residue cysteine 492 is the Glycyl thioester intermediate of the active site.

The protein belongs to the LRR-containing bacterial E3 ligase family. Interacts (via leucine-rich repeat region) with host PKN1 (via the second REM repeat). Ubiquitinated in the presence of host E1 ubiquitin-activating enzyme, E2 ubiquitin-conjugating enzyme and ubiquitin.

The protein localises to the secreted. It localises to the host cytoplasm. Its subcellular location is the host nucleus. It carries out the reaction S-ubiquitinyl-[E2 ubiquitin-conjugating enzyme]-L-cysteine + [acceptor protein]-L-lysine = [E2 ubiquitin-conjugating enzyme]-L-cysteine + N(6)-ubiquitinyl-[acceptor protein]-L-lysine.. Exists in an autoinhibited state in the absence of substrate protein, due to interactions of the leucine-rich repeat domain with the catalytic domain. Is activated upon binding to a substrate protein. Effector proteins function to alter host cell physiology and promote bacterial survival in host tissues. This protein is an E3 ubiquitin-protein ligase that interferes with the host's ubiquitination pathway and targets host proteins for proteasomal degradation. Can ubiquitinate ubiquitin, giving rise to polyubiquitin chains (in vitro). Polyubiquitinates host PKN1, leading to its proteasomal degradation. Down-modulates production of host pro-inflammatory cytokines by inhibiting NF-kappa-B-dependent gene expression; this depends only partially on its E3 ubiquitin-protein ligase activity. The chain is E3 ubiquitin-protein ligase SspH1 (sspH1) from Salmonella typhimurium (strain 14028s / SGSC 2262).